The chain runs to 269 residues: Ethylene-responsive transcription factor ERN1 (269 aa).

Polar residues predominate over residues methionine 1–lysine 15. 2 disordered regions span residues methionine 1–valine 36 and aspartate 128–glycine 157. Positions lysine 34 to isoleucine 91 form a DNA-binding region, AP2/ERF. Low complexity predominate over residues aspartate 128–serine 146.

The protein belongs to the AP2/ERF transcription factor family. ERF subfamily.

The protein resides in the nucleus. Transcription factor involved in the symbiotic nodule signaling pathway in response to rhizobial stimulation. Functions as a transcriptional regulator required for root infection by symbiotic rhizobia, infection thread (IT) formation, and nodule development. May coordinate these processes. Functions downstream of the CCAMK-CYCLOPS complex. Probably not involved in arbuscular mycorrhizal (AM) symbiosis. This chain is Ethylene-responsive transcription factor ERN1, found in Lotus japonicus (Lotus corniculatus var. japonicus).